The chain runs to 808 residues: Putative dimethyl sulfoxide reductase chain YnfE (808 aa).

Residues Met1–Ala43 constitute a signal peptide (tat-type signal). Positions Glu49–Asp110 constitute a 4Fe-4S Mo/W bis-MGD-type domain. Residues Cys56, Cys60, Cys64, and Cys96 each coordinate [4Fe-4S] cluster. Position 196 (Ser196) interacts with Mo-bis(molybdopterin guanine dinucleotide).

The protein belongs to the prokaryotic molybdopterin-containing oxidoreductase family. It depends on [4Fe-4S] cluster as a cofactor. Requires Mo-bis(molybdopterin guanine dinucleotide) as cofactor. In terms of processing, exported by the Tat system. The position of the signal peptide cleavage has not been experimentally proven.

Its subcellular location is the cell membrane. Functionally, terminal reductase during anaerobic growth on various sulfoxide and N-oxide compounds. This is Putative dimethyl sulfoxide reductase chain YnfE (ynfE) from Escherichia coli (strain K12).